Consider the following 419-residue polypeptide: Septin-2 (419 aa).

The Septin-type G domain occupies 40–306; it reads NGFVFNVMCI…ELYRQKRLEQ (267 aa). Residues 50-57 form a G1 motif region; that stretch reads GETGLGKS. GTP is bound by residues 50–57, S79, G105, 186–194, G240, and R255; these read GETGLGKS and KADTISKVE. A G3 motif region spans residues 102 to 105; the sequence is DTVG. A G4 motif region spans residues 185–188; that stretch reads AKAD. Positions 259–269 are important for dimerization; sequence WGTVQVENETH.

Belongs to the TRAFAC class TrmE-Era-EngA-EngB-Septin-like GTPase superfamily. Septin GTPase family. In terms of assembly, may assemble into a multicomponent structure.

The protein resides in the cytoplasm. Its subcellular location is the cytoskeleton. It is found in the spindle. Involved in cytokinesis. This chain is Septin-2, found in Drosophila melanogaster (Fruit fly).